Reading from the N-terminus, the 1422-residue chain is Guanine nucleotide exchange factor subunit RIC1 (1422 aa).

WD repeat units follow at residues 64 to 103 (TQFG…GDKY) and 304 to 343 (NKTG…LICT). Disordered stretches follow at residues 442–462 (NPKY…SPFA) and 986–1005 (SGES…SSSG). Residues 449 to 460 (RAERMPRHEKSP) are compositionally biased toward basic and acidic residues. Phosphothreonine occurs at positions 991 and 995. Phosphoserine is present on residues Ser1014, Ser1016, Ser1018, Ser1036, and Ser1171. Residues 1021 to 1048 (AENVPPGKFGLQKTLSMPTGPSGKRWSK) form a disordered region. 2 disordered regions span residues 1179–1198 (THRD…DAFL) and 1355–1422 (DTFQ…CSVS). Over residues 1378–1396 (GSCSHGSISQSEPGSNNVV) the composition is skewed to polar residues. The span at 1403–1412 (TTQADEEEPL) shows a compositional bias: acidic residues.

It belongs to the RIC1 family. Forms a complex with RGP1; the interaction enhances RAB6A GTPase activity. Interacts (via central domain) with RGP1. Interacts with RAB6A; the interaction is direct with a preference for RAB6A-GDP. Interacts (via C-terminus domain) with RAB33B; the interaction is direct with a preference for RAB33B-GTP. Interacts with GJA1. In terms of tissue distribution, expressed in the eye lens.

It localises to the cytoplasm. Its subcellular location is the cytosol. The protein localises to the membrane. Its function is as follows. The RIC1-RGP1 complex acts as a guanine nucleotide exchange factor (GEF), which activates RAB6A by exchanging bound GDP for free GTP, and may thereby be required for efficient fusion of endosome-derived vesicles with the Golgi compartment. The RIC1-RGP1 complex participates in the recycling of mannose-6-phosphate receptors. Required for phosphorylation and localization of GJA1. Is a regulator of procollagen transport and secretion, and is required for correct cartilage morphogenesis and development of the craniofacial skeleton. The chain is Guanine nucleotide exchange factor subunit RIC1 from Mus musculus (Mouse).